The chain runs to 1300 residues: Zinc finger protein 536 (1300 aa).

Disordered regions lie at residues 1-26 (MEEASLCLGVSSAEPEAEPHLSGPVL) and 47-77 (FPELHPRPNPEEKPPASLEEKAHVPMSGQPM). Basic and acidic residues predominate over residues 48-69 (PELHPRPNPEEKPPASLEEKAH). 6 consecutive C2H2-type zinc fingers follow at residues 130 to 152 (YPCPLCGKRFRFNSILSLHMRTH), 158 to 180 (FKCPYCDHRAAQKGNLKIHLRTH), 274 to 297 (FRCTFCKGKFKKREELDRHIRILH), 300 to 323 (YKCTLCDFAASQEEELISHVEKAH), 345 to 367 (FRCEVCGQVFSQAWFLKGHMRKH), and 373 to 395 (HCCQICGRRFKEPWFLKNHMKVH). Disordered stretches follow at residues 584–604 (HSTKVGSQRDLPSKLDPLESS) and 650–739 (SRVH…QQPA). The segment covering 594-604 (LPSKLDPLESS) has biased composition (basic and acidic residues). Residues 631-653 (TECPDCGRVFRTYHQVVVHSRVH) form a C2H2-type 7 zinc finger. Over residues 657-674 (RKGEEDGLHVGLDERRGS) the composition is skewed to basic and acidic residues. The segment covering 675–696 (GSDQESQSVSRSTTPGSSNVTE) has biased composition (polar residues). 2 consecutive C2H2-type zinc fingers follow at residues 751–773 (KDCPYCGKTFRTSHHLKVHLRIH) and 779–801 (YKCPHCDYAGTQSASLKYHLERH). The disordered stretch occupies residues 802–826 (HRERQNGAGPLSGQPPNQDHKDEMS). Phosphoserine occurs at positions 826 and 827. Positions 856-880 (SQQWTSGVLSSGDHSGQATGMSSEV) are enriched in polar residues. Disordered stretches follow at residues 856–893 (SQQWTSGVLSSGDHSGQATGMSSEVPSDALKGTDLPSK), 937–985 (KDKA…PDAA), and 1124–1260 (SGAS…SLDK). Basic and acidic residues-rich tracts occupy residues 950–972 (HGVDGGEEKPSGKSSQRKSEKSQ) and 1133–1143 (KEPDGKAHSEE). Acidic residues-rich tracts occupy residues 1160–1170 (DLSDIASSEDM) and 1178–1187 (NDEEDVETEP). A compositionally biased stretch (low complexity) spans 1194 to 1209 (LSALSKDSSSDGGDSL).

It belongs to the krueppel C2H2-type zinc-finger protein family.

It is found in the nucleus. Transcriptional repressor that negatively regulates neuron differentiation by repressing retinoic acid-induced gene transcription. Binds and interrupts RARA from binding to retinoic acid response elements (RARE) composed of tandem 5'-AGGTCA-3' sites known as DR1-DR5. Recognizes and binds 2 copies of the core DNA sequence 5'-CCCCCA-3'. This is Zinc finger protein 536 (ZNF536) from Homo sapiens (Human).